We begin with the raw amino-acid sequence, 332 residues long: Cysteine and histidine-rich domain-containing protein 1 (332 aa).

Ala-2 carries the post-translational modification N-acetylalanine. An interaction with PPP5C region spans residues 2 to 77; the sequence is ALLCYNRGCG…KPPEPVKPEV (76 aa). Cys-5, Cys-10, Cys-24, His-27, Cys-42, and Cys-43 together coordinate Zn(2+). CHORD domains follow at residues 5-64 and 157-216; these read CYNR…KGRH and CKNG…KGKH. Thr-47 carries the post-translational modification Phosphothreonine. A Phosphoserine modification is found at Ser-51. 10 residues coordinate Zn(2+): Cys-59, His-64, Cys-157, Cys-162, Cys-176, His-179, Cys-194, Cys-195, Cys-211, and His-216. Residues 65 to 316 are interaction with HSP90AA1 and HSP90AB1; that stretch reads NSEKPPEPVK…AEPMQWASLE (252 aa). In terms of domain architecture, CS spans 227–316; that stretch reads VVPCRHDWHQ…AEPMQWASLE (90 aa).

In terms of assembly, interacts with HSP90AA1, ROCK1 and ROCK2. Interacts with HSP90AB1 and PPP5C. Underexpressed in many breast and lung cancers.

Regulates centrosome duplication, probably by inhibiting the kinase activity of ROCK2. Proposed to act as co-chaperone for HSP90. May play a role in the regulation of NOD1 via a HSP90 chaperone complex. In vitro, has intrinsic chaperone activity. This function may be achieved by inhibiting association of ROCK2 with NPM1. Plays a role in ensuring the localization of the tyrosine kinase receptor EGFR to the plasma membrane, and thus ensures the subsequent regulation of EGFR activity and EGF-induced actin cytoskeleton remodeling. Involved in stress response. Prevents tumorigenesis. In Homo sapiens (Human), this protein is Cysteine and histidine-rich domain-containing protein 1 (CHORDC1).